The chain runs to 360 residues: Inward rectifier potassium channel 13 (360 aa).

At 1–50 the chain is on the cytoplasmic side; sequence MDSRNCKVNAPLLSQRYRRMVTKDGHSTLQMDGAQRGLVYLRDAWGILMD. The chain crosses the membrane as a helical span at residues 51–77; that stretch reads MRWRWMMLVFSASFVVHWLVFAVLWYA. Over 78–105 the chain is Extracellular; the sequence is VAEMNGDLEIDHDVPPENHTICVKHITS. An intramembrane region (helical; Pore-forming) is located at residues 106–122; it reads FTAAFSFSLETQLTIGY. Residues 119–124 carry the Selectivity filter motif; that stretch reads TIGYGT. The Extracellular segment spans residues 123–131; sequence GTMFPSGDC. The helical transmembrane segment at 132–157 threads the bilayer; it reads PSAIALLAIQMLLGLMLEAFITGAFV. The Cytoplasmic segment spans residues 158-360; it reads AKIARPKNRA…FQIAETGLTE (203 aa). The residue at position 201 (serine 201) is a Phosphoserine; by PKC. Serine 287 is subject to Phosphoserine; by PKA.

Belongs to the inward rectifier-type potassium channel (TC 1.A.2.1) family. KCNJ13 subfamily. Homotetramer. Interacts with RAB28; the interaction may facilitate cone outer segments phagocytosis. Phosphorylation at Ser-201 by PKC strongly inhibits ionic currents, while phosphorylation at Ser-287 by PKA increases them.

The protein resides in the membrane. It is found in the cell membrane. It carries out the reaction K(+)(in) = K(+)(out). With respect to regulation, inhibited by Ba(2+) and Cs(+), although sensitivity to those inhibitors is much lower than in other Kir channels. In terms of biological role, inward rectifier potassium channels are characterized by a greater tendency to allow potassium to flow into the cell rather than out of it. Their voltage dependence is regulated by the concentration of extracellular potassium; as external potassium is raised, the voltage range of the channel opening shifts to more positive voltages. The inward rectification is mainly due to the blockage of outward current by internal magnesium. KCNJ13 has a very low single channel conductance, low sensitivity to block by external barium and cesium, and no dependence of its inward rectification properties on the internal blocking particle magnesium. This chain is Inward rectifier potassium channel 13 (Kcnj13), found in Rattus norvegicus (Rat).